The sequence spans 616 residues: Replication protein A 70 kDa DNA-binding subunit (616 aa).

Met1 is subject to N-acetylmethionine. Glycyl lysine isopeptide (Lys-Gly) (interchain with G-Cter in ubiquitin) cross-links involve residues Lys22 and Lys88. Residues 121–155 (GLGQPQVAPPAPAASPAASSRPQPQNGTSGAGSTV) are disordered. Residues 134-145 (ASPAASSRPQPQ) show a composition bias toward low complexity. Residues 146-155 (NGTSGAGSTV) show a composition bias toward polar residues. N6-acetyllysine; alternate is present on residues Lys163 and Lys167. Glycyl lysine isopeptide (Lys-Gly) (interchain with G-Cter in ubiquitin); alternate cross-links involve residues Lys163 and Lys167. Thr180 bears the Phosphothreonine mark. Lys183 is covalently cross-linked (Glycyl lysine isopeptide (Lys-Gly) (interchain with G-Cter in ubiquitin)). A Phosphothreonine modification is found at Thr191. A DNA-binding region (OB) is located at residues 197–281 (WTICARVTNK…VKNDYEMTFN (85 aa)). Glycyl lysine isopeptide (Lys-Gly) (interchain with G-Cter in ubiquitin) cross-links involve residues Lys220 and Lys244. Lys259 bears the N6-acetyllysine; alternate mark. Residue Lys259 forms a Glycyl lysine isopeptide (Lys-Gly) (interchain with G-Cter in ubiquitin); alternate linkage. Residues Lys267 and Lys331 each participate in a glycyl lysine isopeptide (Lys-Gly) (interchain with G-Cter in ubiquitin) cross-link. Residue Ser384 is modified to Phosphoserine. Glycyl lysine isopeptide (Lys-Gly) (interchain with G-Cter in ubiquitin) cross-links involve residues Lys410 and Lys431. Residue Lys449 forms a Glycyl lysine isopeptide (Lys-Gly) (interchain with G-Cter in SUMO) linkage. Residue Lys458 forms a Glycyl lysine isopeptide (Lys-Gly) (interchain with G-Cter in ubiquitin) linkage. The C4-type zinc-finger motif lies at 481 to 503 (CPTQDCNKKVIDQQNGLYRCEKC). Lys553 participates in a covalent cross-link: Glycyl lysine isopeptide (Lys-Gly) (interchain with G-Cter in ubiquitin). Lys577 is covalently cross-linked (Glycyl lysine isopeptide (Lys-Gly) (interchain with G-Cter in SUMO)).

This sequence belongs to the replication factor A protein 1 family. As to quaternary structure, component of the canonical replication protein A complex (RPA), a heterotrimer composed of RPA1, RPA2 and RPA3. The DNA-binding activity may reside exclusively on the RPA1 subunit. Interacts with PRPF19; the PRP19-CDC5L complex is recruited to the sites of DNA repair where it ubiquitinates the replication protein A complex (RPA). Interacts with RIPK1. Interacts with the polymerase alpha subunit POLA1/p180; this interaction stabilizes the replicative complex and reduces the misincorporation rate of DNA polymerase alpha by acting as a fidelity clamp. Interacts with RAD51 and SENP6 to regulate DNA repair. Interacts with HELB; this interaction promotes HELB recruitment to chromatin following DNA damage. Interacts with PRIMPOL; leading to recruit PRIMPOL on chromatin and stimulate its DNA primase activity. Interacts with XPA; the interaction is direct and associates XPA with the RPA complex. Interacts with ETAA1; the interaction is direct and promotes ETAA1 recruitment at stalled replication forks. Interacts with RPA1; this interaction associates HROB with the RPA complex. Interacts (when poly-ADP-ribosylated) with HTATSF1. In terms of processing, DNA damage-induced 'Lys-63'-linked polyubiquitination by PRPF19 mediates ATRIP recruitment to the RPA complex at sites of DNA damage and activation of ATR. Ubiquitinated by RFWD3 at stalled replication forks in response to DNA damage: ubiquitination by RFWD3 does not lead to degradation by the proteasome and promotes removal of the RPA complex from stalled replication forks, promoting homologous recombination. Post-translationally, sumoylated on lysine residues Lys-449 and Lys-577, with Lys-449 being the major site. Sumoylation promotes recruitment of RAD51 to the DNA damage foci to initiate DNA repair through homologous recombination. Desumoylated by SENP6. Poly-ADP-ribosylated by PARP1; promoting recruitment of HTATSF1.

It localises to the nucleus. The protein localises to the PML body. As part of the heterotrimeric replication protein A complex (RPA/RP-A), binds and stabilizes single-stranded DNA intermediates, that form during DNA replication or upon DNA stress. It prevents their reannealing and in parallel, recruits and activates different proteins and complexes involved in DNA metabolism. Thereby, it plays an essential role both in DNA replication and the cellular response to DNA damage. In the cellular response to DNA damage, the RPA complex controls DNA repair and DNA damage checkpoint activation. Through recruitment of ATRIP activates the ATR kinase a master regulator of the DNA damage response. It is required for the recruitment of the DNA double-strand break repair factors RAD51 and RAD52 to chromatin in response to DNA damage. Also recruits to sites of DNA damage proteins like XPA and XPG that are involved in nucleotide excision repair and is required for this mechanism of DNA repair. Also plays a role in base excision repair (BER) probably through interaction with UNG. Also recruits SMARCAL1/HARP, which is involved in replication fork restart, to sites of DNA damage. May also play a role in telomere maintenance. The chain is Replication protein A 70 kDa DNA-binding subunit (RPA1) from Pongo abelii (Sumatran orangutan).